The chain runs to 311 residues: 4-hydroxy-tetrahydrodipicolinate synthase (311 aa).

Residue Thr51 participates in pyruvate binding. The active-site Proton donor/acceptor is the Tyr140. Lys168 (schiff-base intermediate with substrate) is an active-site residue. Ile209 serves as a coordination point for pyruvate.

Belongs to the DapA family. In terms of assembly, homotetramer; dimer of dimers.

It is found in the cytoplasm. The catalysed reaction is L-aspartate 4-semialdehyde + pyruvate = (2S,4S)-4-hydroxy-2,3,4,5-tetrahydrodipicolinate + H2O + H(+). Its pathway is amino-acid biosynthesis; L-lysine biosynthesis via DAP pathway; (S)-tetrahydrodipicolinate from L-aspartate: step 3/4. Functionally, catalyzes the condensation of (S)-aspartate-beta-semialdehyde [(S)-ASA] and pyruvate to 4-hydroxy-tetrahydrodipicolinate (HTPA). The protein is 4-hydroxy-tetrahydrodipicolinate synthase of Streptococcus pneumoniae (strain 70585).